A 298-amino-acid polypeptide reads, in one-letter code: Acetylglutamate kinase (298 aa).

Residues 69–70, Arg-91, and Asn-196 contribute to the substrate site; that span reads GG.

This sequence belongs to the acetylglutamate kinase family. ArgB subfamily.

The protein localises to the cytoplasm. It carries out the reaction N-acetyl-L-glutamate + ATP = N-acetyl-L-glutamyl 5-phosphate + ADP. The protein operates within amino-acid biosynthesis; L-arginine biosynthesis; N(2)-acetyl-L-ornithine from L-glutamate: step 2/4. In terms of biological role, catalyzes the ATP-dependent phosphorylation of N-acetyl-L-glutamate. In Rhodopseudomonas palustris (strain ATCC BAA-98 / CGA009), this protein is Acetylglutamate kinase.